The primary structure comprises 85 residues: RNA-binding protein Hfq (85 aa).

The 60-residue stretch at 9-68 folds into the Sm domain; the sequence is DPFLNALRRERIPVSIYLVNGIKLQGQIESFDQFVVLLKNTVSQMVYKHAISTVVPARIP.

Belongs to the Hfq family. As to quaternary structure, homohexamer.

In terms of biological role, RNA chaperone that binds small regulatory RNA (sRNAs) and mRNAs to facilitate mRNA translational regulation in response to envelope stress, environmental stress and changes in metabolite concentrations. Also binds with high specificity to tRNAs. This is RNA-binding protein Hfq from Idiomarina loihiensis (strain ATCC BAA-735 / DSM 15497 / L2-TR).